A 186-amino-acid chain; its full sequence is Acetyltransferase PA2578 (186 aa).

The region spanning 12 to 176 (LQLVPFQLGH…NVVLMGLLRQ (165 aa)) is the N-acetyltransferase domain. Residues glutamine 37, 97-99 (IVL), glycine 105, asparagine 137, and 142-144 (HLY) each bind CoA.

Homodimer.

Its function is as follows. Catalyzes the transfer of an acetyl group from acetyl coenzyme A (AcCoA) to an acceptor substrate and releases both CoA and the acetylated product. It prefers the antibiotic chloramphenicol. The polypeptide is Acetyltransferase PA2578 (Pseudomonas aeruginosa (strain ATCC 15692 / DSM 22644 / CIP 104116 / JCM 14847 / LMG 12228 / 1C / PRS 101 / PAO1)).